Here is a 117-residue protein sequence, read N- to C-terminus: Envelope glycoprotein J (117 aa).

The N-terminal stretch at 1–26 (MRSLLFVVGAWVAAAVTHLTPNAALA) is a signal peptide. Positions 26–64 (ATGTTPTVGANSTADPGTGANGTTVPAAGTPANSTTAAE) are disordered. Positions 27-40 (TGTTPTVGANSTAD) are enriched in polar residues. The Extracellular segment spans residues 27–73 (TGTTPTVGANSTADPGTGANGTTVPAAGTPANSTTAAETPAPFPPVD). 3 N-linked (GlcNAc...) asparagine; by host glycosylation sites follow: asparagine 36, asparagine 46, and asparagine 58. A helical transmembrane segment spans residues 74–94 (FALPVVIGGLCALTLAAMGAG). Topologically, residues 95-117 (ALLHRCCRRAAARRRQRAAYVYA) are cytoplasmic.

This sequence belongs to the alphaherpesvirinae glycoprotein J family.

The protein resides in the host Golgi apparatus membrane. The protein localises to the host endoplasmic reticulum membrane. Its subcellular location is the host endosome membrane. Functionally, inhibits host cell apoptosis. Induces an increase in reactive oxygen species (ROS) in the host cell. This is Envelope glycoprotein J (gJ) from Homo sapiens (Human).